We begin with the raw amino-acid sequence, 450 residues long: Probable ATP-dependent RNA helicase MG425 homolog (450 aa).

The short motif at 3–31 (STFNELGVSPALIATLKDNNINQPTTIQQ) is the Q motif element. The Helicase ATP-binding domain maps to 34-206 (IPQFLQHQNL…KQITKNGIFL (173 aa)). 47 to 54 (SPTGTGKT) contributes to the ATP binding site. The DEVD box motif lies at 154–157 (DEVD). The region spanning 234 to 384 (RKKQALYSLV…PLRPMRLRLI (151 aa)) is the Helicase C-terminal domain. Residues 429-450 (MRQPERDMQKNKLHDSDWQSNM) form a disordered region. Basic and acidic residues predominate over residues 430-450 (RQPERDMQKNKLHDSDWQSNM).

This sequence belongs to the DEAD box helicase family.

The catalysed reaction is ATP + H2O = ADP + phosphate + H(+). The chain is Probable ATP-dependent RNA helicase MG425 homolog from Mycoplasma pneumoniae (strain ATCC 29342 / M129 / Subtype 1) (Mycoplasmoides pneumoniae).